A 95-amino-acid chain; its full sequence is ESAT-6-like protein EsxA (95 aa).

The protein belongs to the WXG100 family. ESAT-6 subfamily. Forms a tight 1:1 complex with EsxB. An artificial EsxA-EsxB heterodimer interacts with EspA.

The protein resides in the secreted. Functionally, an exported protein. Unlike its M.tuberculosis counterpart has poor pore forming ability in artificial liposomes, does not undergo conformational change at acidic pH. Mutation of 2 residues to those found in M.tuberculosis (25-TA-26 to IH) alters the properties of this protein so that it inserts into liposomes at acidic pH, forming pores, like its M.tuberculosis counterpart. The sequence is that of ESAT-6-like protein EsxA from Mycolicibacterium smegmatis (strain ATCC 700084 / mc(2)155) (Mycobacterium smegmatis).